Reading from the N-terminus, the 73-residue chain is Metallothionein (73 aa).

16 residues coordinate Cd(2+): C15, C20, C26, C28, C32, C34, C39, C46, C48, C52, C54, C58, C64, C66, C70, and C72.

The protein belongs to the metallothionein superfamily. Type 2 family.

Its function is as follows. The metallothioneins are involved in the cellular sequestration of toxic metal ions. The protein is Metallothionein of Dreissena polymorpha (Zebra mussel).